Consider the following 104-residue polypeptide: Glycine-rich protein (104 aa).

The N-terminal stretch at 1–18 (MKSMIAAILFALVATSLA) is a signal peptide.

This sequence belongs to the non-disulfide-bridged peptide (NDBP) superfamily. In terms of tissue distribution, expressed by the venom gland.

The protein localises to the secreted. This chain is Glycine-rich protein, found in Lychas mucronatus (Chinese swimming scorpion).